The chain runs to 136 residues: NADPH-dependent 7-cyano-7-deazaguanine reductase (136 aa).

The active-site Thioimide intermediate is the Cys50. The active-site Proton donor is the Asp57. Residues 72-74 (YEL) and 91-92 (HE) each bind substrate.

The protein belongs to the GTP cyclohydrolase I family. QueF type 1 subfamily.

The protein localises to the cytoplasm. It catalyses the reaction 7-aminomethyl-7-carbaguanine + 2 NADP(+) = 7-cyano-7-deazaguanine + 2 NADPH + 3 H(+). It participates in tRNA modification; tRNA-queuosine biosynthesis. Catalyzes the NADPH-dependent reduction of 7-cyano-7-deazaguanine (preQ0) to 7-aminomethyl-7-deazaguanine (preQ1). The protein is NADPH-dependent 7-cyano-7-deazaguanine reductase of Prochlorococcus marinus (strain MIT 9301).